The primary structure comprises 224 residues: 7-cyano-7-deazaguanine synthase (224 aa).

ATP is bound at residue leucine 8 to isoleucine 18. Residues cysteine 186, cysteine 196, cysteine 199, and cysteine 202 each coordinate Zn(2+).

Belongs to the QueC family. Zn(2+) is required as a cofactor.

The enzyme catalyses 7-carboxy-7-deazaguanine + NH4(+) + ATP = 7-cyano-7-deazaguanine + ADP + phosphate + H2O + H(+). It functions in the pathway purine metabolism; 7-cyano-7-deazaguanine biosynthesis. Its function is as follows. Catalyzes the ATP-dependent conversion of 7-carboxy-7-deazaguanine (CDG) to 7-cyano-7-deazaguanine (preQ(0)). The chain is 7-cyano-7-deazaguanine synthase from Xanthomonas euvesicatoria pv. vesicatoria (strain 85-10) (Xanthomonas campestris pv. vesicatoria).